The primary structure comprises 298 residues: Ectoine dioxygenase (298 aa).

Basic and acidic residues predominate over residues 1 to 18 (MLQQAIDRDPVDRIDRYP). Positions 1 to 26 (MLQQAIDRDPVDRIDRYPTRTAEPAP) are disordered. Glutamine 133 is an L-ectoine binding site. Fe cation-binding residues include histidine 150, aspartate 152, and histidine 251.

It belongs to the PhyH family. EctD subfamily. As to quaternary structure, homodimer. It depends on Fe(2+) as a cofactor.

The enzyme catalyses L-ectoine + 2-oxoglutarate + O2 = 5-hydroxyectoine + succinate + CO2. Its function is as follows. Involved in the biosynthesis of 5-hydroxyectoine, called compatible solute, which helps organisms to survive extreme osmotic stress by acting as a highly soluble organic osmolyte. Catalyzes the 2-oxoglutarate-dependent selective hydroxylation of L-ectoine to yield (4S,5S)-5-hydroxyectoine. The polypeptide is Ectoine dioxygenase (Nocardia farcinica (strain IFM 10152)).